Here is a 252-residue protein sequence, read N- to C-terminus: Outer membrane protein P1 (252 aa).

The N-terminal stretch at 1 to 23 (METTTKLAIGVSALCCLASAAFA) is a signal peptide.

It belongs to the Coxiella porin P1 (CPP1) (TC 1.B.43) family. As to quaternary structure, may form trimers.

It localises to the cell outer membrane. Functionally, able to form a pore in lipid bilayers. The sequence is that of Outer membrane protein P1 (ompP1) from Coxiella burnetii (strain RSA 493 / Nine Mile phase I).